The following is a 932-amino-acid chain: Protocadherin gamma-A12 (932 aa).

Residues 1–29 (MIPARLHRDYKGLVLLGILLGTLWETGCT) form the signal peptide. Cadherin domains are found at residues 30 to 133 (QIRY…APYF), 134 to 242 (RESE…APAF), 243 to 347 (AQPE…APEV), 348 to 452 (VLTS…PPVF), 453 to 562 (PQAS…APEI), and 570 to 683 (DGST…SPAN). Residues 30–692 (QIRYSVPEEL…NSETSDLTLY (663 aa)) lie on the Extracellular side of the membrane. N-linked (GlcNAc...) asparagine glycosylation is found at Asn-265, Asn-419, and Asn-545. The chain crosses the membrane as a helical span at residues 693-713 (LVVAVAAVSCVFLAFVILLLA). At 714–932 (LRLRRWHKSR…KKKSGKKEKK (219 aa)) the chain is on the cytoplasmic side. 2 disordered regions span residues 803–841 (SHGL…WPNN) and 902–932 (ATLT…KEKK). Polar residues predominate over residues 816–841 (WRFSQAQRPGTSGSQNGDDTGTWPNN). Basic residues predominate over residues 922 to 932 (NKKKSGKKEKK).

It localises to the cell membrane. Its function is as follows. Potential calcium-dependent cell-adhesion protein. May be involved in the establishment and maintenance of specific neuronal connections in the brain. This is Protocadherin gamma-A12 (PCDHGA12) from Homo sapiens (Human).